A 167-amino-acid polypeptide reads, in one-letter code: cAMP-dependent protein kinase type I-alpha regulatory subunit (167 aa).

Position 12 is a phosphothreonine (Thr-12). A phosphoserine mark is found at Ser-14 and Ser-20. Positions 30 to 33 (RGAI) match the Pseudophosphorylation motif motif. Residue Ser-34 is modified to Phosphoserine. 3',5'-cyclic AMP-binding positions include 51 to 78 (LFSH…SKVS), 79 to 167 (ILES…ILKR), Glu-147, and Arg-156. Phosphoserine is present on Ser-82.

This sequence belongs to the cAMP-dependent kinase regulatory chain family. As to quaternary structure, the inactive holoenzyme is composed of two regulatory chains and two catalytic chains. Activation by cAMP releases the two active catalytic monomers and the regulatory dimer. Interacts with PRKACA and PRKACB. PRKAR1A also interacts with RFC2; the complex may be involved in cell survival. Interacts with AKAP4. Interacts with RARA; the interaction occurs in the presence of cAMP or FSH and regulates RARA transcriptional activity. Interacts with the phosphorylated form of PJA2. Interacts with CBFA2T3. Interacts with PRKX; regulates this cAMP-dependent protein kinase. Interacts with smAKAP; this interaction may target PRKAR1A to the plasma membrane. Interacts with AICDA. Post-translationally, the pseudophosphorylation site binds to the substrate-binding region of the catalytic chain, resulting in the inhibition of its activity.

It localises to the cell membrane. Functionally, regulatory subunit of the cAMP-dependent protein kinases involved in cAMP signaling in cells. This is cAMP-dependent protein kinase type I-alpha regulatory subunit from Mesocricetus auratus (Golden hamster).